The sequence spans 28 residues: MSGGYSNGFALLVVLFILLIIVGAAYIY.

The chain crosses the membrane as a helical span at residues 8-28; sequence GFALLVVLFILLIIVGAAYIY.

This sequence belongs to the SscA family.

The protein localises to the spore coat. Its subcellular location is the membrane. Functionally, spore protein involved in the assembly of several components of the spore coat, including CotB, CotG and CotH, and in spore germination. The sequence is that of Small spore coat assembly protein A from Bacillus subtilis (strain 168).